The chain runs to 101 residues: Putative pterin-4-alpha-carbinolamine dehydratase (101 aa).

Belongs to the pterin-4-alpha-carbinolamine dehydratase family.

The enzyme catalyses (4aS,6R)-4a-hydroxy-L-erythro-5,6,7,8-tetrahydrobiopterin = (6R)-L-erythro-6,7-dihydrobiopterin + H2O. The polypeptide is Putative pterin-4-alpha-carbinolamine dehydratase (Rhizobium etli (strain ATCC 51251 / DSM 11541 / JCM 21823 / NBRC 15573 / CFN 42)).